A 78-amino-acid polypeptide reads, in one-letter code: Small ribosomal subunit protein bS20 (78 aa).

Belongs to the bacterial ribosomal protein bS20 family.

Binds directly to 16S ribosomal RNA. In Streptococcus pneumoniae serotype 19F (strain G54), this protein is Small ribosomal subunit protein bS20.